A 184-amino-acid chain; its full sequence is Peptide deformylase 2 (184 aa).

Positions 110 and 153 each coordinate Fe cation. Glutamate 154 is an active-site residue. Position 157 (histidine 157) interacts with Fe cation.

This sequence belongs to the polypeptide deformylase family. Fe(2+) is required as a cofactor.

The catalysed reaction is N-terminal N-formyl-L-methionyl-[peptide] + H2O = N-terminal L-methionyl-[peptide] + formate. Removes the formyl group from the N-terminal Met of newly synthesized proteins. Requires at least a dipeptide for an efficient rate of reaction. N-terminal L-methionine is a prerequisite for activity but the enzyme has broad specificity at other positions. This is Peptide deformylase 2 from Bacillus cereus (strain ATCC 14579 / DSM 31 / CCUG 7414 / JCM 2152 / NBRC 15305 / NCIMB 9373 / NCTC 2599 / NRRL B-3711).